The following is a 443-amino-acid chain: EGF-containing fibulin-like extracellular matrix protein 2 (443 aa).

A signal peptide spans 1–25 (MLPFASCLPGSLLLWALLLLLLGAA). Positions 36–81 (YTECTDGYEWDADSQHCRDVNECLTIPEACKGEMKCINHYGGYLCL) constitute an EGF-like 1; atypical domain. 18 disulfide bridges follow: Cys58–Cys121, Cys65–Cys80, Cys71–Cys109, Cys127–Cys140, Cys134–Cys149, Cys151–Cys162, Cys168–Cys177, Cys173–Cys186, Cys188–Cys201, Cys207–Cys217, Cys213–Cys226, Cys228–Cys241, Cys247–Cys258, Cys254–Cys267, Cys269–Cys281, Cys287–Cys300, Cys294–Cys309, and Cys315–Cys327. Positions 123-163 (DVDECAQALHDCRPSQDCHNLPGSYQCTCPDGYRKVGPECV) constitute an EGF-like 2; calcium-binding domain. The 39-residue stretch at 164–202 (DIDECRYRYCQHRCVNLPGSFRCQCEPGFQLGPNNRSCV) folds into the EGF-like 3; calcium-binding domain. A glycan (N-linked (GlcNAc...) asparagine) is linked at Asn198. Residues 203–242 (DVNECDMGAPCEQRCFNSYGTFLCRCNQGYELHRDGFSCS) enclose the EGF-like 4; calcium-binding domain. The region spanning 243–282 (DIDECSYSSYLCQYRCVNEPGRFSCHCPQGYQLLATRLCQ) is the EGF-like 5; calcium-binding domain. An EGF-like 6; calcium-binding domain is found at 283–328 (DIDECETGAHQCSEAQTCVNFHGGYRCVDTNRCVEPYVQVSDNRCF). Residue Asn394 is glycosylated (N-linked (GlcNAc...) asparagine).

It belongs to the fibulin family. In terms of assembly, homodimer; disulfide-linked. Multimer; allows heparin binding. Monomer. Interacts with FBN1 (via N-terminal domain); this interaction inhibits EFEMP2 binding to LOX and ELN. Interacts with LOX (via propeptide); this interaction is strong and facilitates formation of ternary complexes with ELN during elastic fiber assembly; this interaction limits interaction of EFEMP2 with FBLN5. Interacts with PITX2. Interacts with ELN with moderate affinity; this interaction regulates ELN self-assembly maturation stage. Interacts with FBLN5 with moderate affinity. Interacts with LOXL1 (via propeptide), LTBP1 and TGFB1 stronger than with LOXL2 and LTBP3. Interacts with PCOLCE. Interacts with collagen type IV trimer (COL4A1-COL4A1-COL4A2), NID2 and moderately with COL15A1-derived endostatin. Interacts with EMILIN1; this interaction promotes the incorporation of EFEMP2 into the extracellular matrix. Interacts with LTBP4; the LTBP4 long form (LTBP4L) has a stronger binding affinity than the LTBP4 short form and the LTBP4 long form promotes fibrillar deposition of EFEMP2. N-glycosylated; contains mostly complex-type glycans. Not O-glycosylated. In terms of processing, cleaved by ELANE; produces a 50-55 kDa fragment. Cleaved by MMP2 and MMP9; produces several fragments.

It is found in the secreted. Its subcellular location is the extracellular space. It localises to the extracellular matrix. The protein localises to the basement membrane. Plays a crucial role in elastic fiber formation in tissue, and in the formation of ultrastructural connections between elastic laminae and smooth muscle cells in the aorta, therefore participates in terminal differentiation and maturation of smooth muscle cell (SMC) and in the mechanical properties and wall integrity maintenance of the aorta. In addition, is involved in the control of collagen fibril assembly in tissue throught proteolytic activation of LOX leading to cross- linking of collagen and elastin. Also promotes ELN coacervation and participates in the deposition of ELN coacervates on to microfibrils but also regulates ELN cross- linking through LOX interaction. Moreover adheres to the cells through heparin binding in a calcium-dependent manner and regulates vascularlar smooth muscle cells proliferation through angiotensin signaling. In Cricetulus griseus (Chinese hamster), this protein is EGF-containing fibulin-like extracellular matrix protein 2.